Consider the following 119-residue polypeptide: MARVKGGVVSRKRRKRVLKLAKGYYGAKHILFRTAKEQVMNSYYYAYRDRRQKKRDFRKLWITRINAAARLNGLSYSQLMHGLKLAEIEVNRKMLADLAVNDAAAFTALADAAKAKLGK.

It belongs to the bacterial ribosomal protein bL20 family.

Binds directly to 23S ribosomal RNA and is necessary for the in vitro assembly process of the 50S ribosomal subunit. It is not involved in the protein synthesizing functions of that subunit. The polypeptide is Large ribosomal subunit protein bL20 (Streptococcus thermophilus (strain ATCC BAA-491 / LMD-9)).